The primary structure comprises 676 residues: Forkhead box protein biniou (676 aa).

Disordered stretches follow at residues 22 to 50 (YHDP…GHPY), 131 to 160 (AHSA…SSST), 203 to 232 (QEQA…SRIS), 249 to 312 (NYSS…PEKP), and 583 to 651 (IQHA…AYLP). Residues 34-48 (PHAHSHPHQHTHTGH) show a composition bias toward basic residues. Over residues 133 to 160 (SAGSASPQSNSKTPTDLPQDLQYASSST) the composition is skewed to polar residues. Over residues 203-220 (QEQAGQQQPQQLPAQQLQ) the composition is skewed to low complexity. Residues 257–273 (PAKSLNGSESSPPSQNH) show a composition bias toward polar residues. A DNA-binding region (fork-head) is located at residues 311-408 (KPALSYINMI…DEGSLRRRPR (98 aa)). A compositionally biased stretch (low complexity) spans 583–593 (IQHAQAQAQAQ). Basic residues predominate over residues 594–611 (AHHHHHQHHASHPSHSHQ). Positions 612–625 (GHGSMHQNHGTSST) are enriched in low complexity. The segment covering 637–647 (GIDHSPIDRKP) has biased composition (basic and acidic residues).

In terms of assembly, binds to DNA. In terms of tissue distribution, in embryo, expressed in all types of visceral muscles and their progenitors (at protein level). In late stage 10 embryo, expressed in the caudal visceral mesoderm and trunk and hindgut visceral mesoderm progenitors.

The protein localises to the nucleus. Component of a regulatory network controlling visceral mesoderm development and midgut morphogenesis. Transcriptional regulator involved in the activation of a large number of genes in the visceral mesoderm including betaTub60D, dpp and Hand. Binds to and regulates a number of enhancers driving expression in the visceral mesoderm in a temporally and spatially restricted manner. Also to binds to enhancers cooperatively with activators, such as bap or HLH54F, to coregulate expression of shared target genes in the visceral mesoderm. Binds to the Ndg enhancer and drives expression of Ndg in the late visceral musculature. May be involved in the transcriptional regulation of wupA in the visceral mesoderm. Plays an indirect role in the later stages of salivary gland positioning. In Drosophila melanogaster (Fruit fly), this protein is Forkhead box protein biniou (bin).